Reading from the N-terminus, the 347-residue chain is MRRLLLLFGGRSQEHSVSYASARALLEHICDEWTVIPVGITKHGDFVYCSTVSEQDYGEVIDNGNRVVWPSRAGCKKIEVVQARGKSFFVEFDLVFPLLHGVFGEDGTIQGMLDLLDIPYVGSGVFASAAAMDKHYTKILCSHAGIPVLPWYLIKGHAWHKNRDSFLKQISDRFTFPLFVKPVDAGSSFGCTFVDFFEQLPVAIEHALQHGKSAIVEPALDAPEVFCSLIENNGVLQCSELVFVKHSGSKFYDYSAKYLNPVEFVIPAQFDNTDGYAEIASKVFFELGCRHYARIDFFVTESGLVLNEINTSPGLTQKSIFPSSFKSMQYSQVIETILASAYCQVKR.

Positions lysine 138 to alanine 339 constitute an ATP-grasp domain. ATP is bound at residue serine 171–phenylalanine 226. Positions 296, 308, and 310 each coordinate Mg(2+).

It belongs to the D-alanine--D-alanine ligase family. The cofactor is Mg(2+). Mn(2+) is required as a cofactor.

Its subcellular location is the cytoplasm. The catalysed reaction is 2 D-alanine + ATP = D-alanyl-D-alanine + ADP + phosphate + H(+). Its pathway is cell wall biogenesis; peptidoglycan biosynthesis. Functionally, cell wall formation. This is D-alanine--D-alanine ligase from Tropheryma whipplei (strain Twist) (Whipple's bacillus).